Here is a 249-residue protein sequence, read N- to C-terminus: Leucyl/phenylalanyl-tRNA--protein transferase (249 aa).

The disordered stretch occupies residues M1–E21.

Belongs to the L/F-transferase family.

The protein resides in the cytoplasm. The enzyme catalyses N-terminal L-lysyl-[protein] + L-leucyl-tRNA(Leu) = N-terminal L-leucyl-L-lysyl-[protein] + tRNA(Leu) + H(+). It catalyses the reaction N-terminal L-arginyl-[protein] + L-leucyl-tRNA(Leu) = N-terminal L-leucyl-L-arginyl-[protein] + tRNA(Leu) + H(+). It carries out the reaction L-phenylalanyl-tRNA(Phe) + an N-terminal L-alpha-aminoacyl-[protein] = an N-terminal L-phenylalanyl-L-alpha-aminoacyl-[protein] + tRNA(Phe). Its function is as follows. Functions in the N-end rule pathway of protein degradation where it conjugates Leu, Phe and, less efficiently, Met from aminoacyl-tRNAs to the N-termini of proteins containing an N-terminal arginine or lysine. The chain is Leucyl/phenylalanyl-tRNA--protein transferase from Xanthomonas campestris pv. campestris (strain 8004).